A 156-amino-acid polypeptide reads, in one-letter code: Enhancer of split M1 protein (156 aa).

Residues 1–19 (MMSQTLTLCCLALVACVYG) form the signal peptide. 2 consecutive Kazal-like domains span residues 23 to 81 (STND…AWCS) and 96 to 156 (KLEV…EEKC). Cystine bridges form between Cys29/Cys62, Cys33/Cys55, Cys102/Cys135, Cys106/Cys128, and Cys114/Cys156.

The sequence is that of Enhancer of split M1 protein (Kaz-m1) from Drosophila melanogaster (Fruit fly).